The chain runs to 2188 residues: MSAAQGLALKLRAAPAAGGVRGEKRRRAASATAAAAARPRHGAMSLEGGFLGGALPAEDRVAPRASASRQAEAGAGAGAARPPPRSMSKIPESSIGLYDPSMERDSCGVGFIAELSGEYSRKTVDDAIEMLDRMAHRGACGCEKNTGDGAGILVALPHNFFREVTKDAGFELPPPGEYAVGMFFMPTDDKRREKSKLLFREKAELLGHTVLGWRRVPTDNSGLGQSAVDTEPVIEQVFVTKSASSKADFERQMYVLRRFSVMSIREVLGVKNGGTKDFYMCSLSSRTIVYKGQLKPSQLKGYFFADLGDESFTSYMALIHSRFSTNTFPSWDRAQPMRVLGHNGEINTLRGNKNWMKAREGLLKCEGLGLTRDEMLKLLPIVDATSSDSGAIDNVLELLIQSGRSAPEAVMMMIPEAWQNDVNMDPERKALYEFFSALMEPWDGPALISFTDGRYLGATLDRNGLRPGRFYVTYSGRVIMASEVGVVDVPPQDVSRKGRLNPGMMLLVDFENHCVVNDDELKKEYSKVRPYGEWLKRQRIQLTDIIESVNEAERIAPSISGALPITKENKADMGICGILTPLKAFGYTREALEMLMLPMAKDGQEALGSMGNDTPLAVMSNREKLTFEYFKQMFAQVTNPPIDPIREKIVTSMECMIGPEGDLSETTERQCHRLTLKSPLLNTNEMEAIKKMNYRGWRSKVLDITYPKKNGRMGLKQTLDKICAQAREAIHEGYTILVLSDRGFSSERVAVSSLLAVGAVHQHLVSHLERTRIGLLVESAEPREVHHFSTLIGFGADAICPYLAIEAIWRLQIDGRIPPNDGKPYTQEQLIEKYFYASNYGMMKVLAKMGISTLASYKGAQIFEALGLASEVVSKCFEGTPSRVEGATFEMLAQDALRLHEIAFPSRTLPPGSADANALPNPGDYHWRKNGEVHLNDPFSIAKLQEAARINSREAYKEYSRRIYELNKACTLRGMLKFREIPNQISLDEVEPAKEIVKRFCTGAMSYGSISLEAHTSLAEAMNTLGGKSNTGEGGEQPCRMVPLPDGSKNPRISAIKQVASGRFGVSIYYLTNAVEVQIKMAQGAKPGEGGELPGHKVIGDIAVTRNSTAGVGLISPPPHHDIYSIEDLAQLIHDLKNANPGARISVKLVSEAGVGIVASGVVKGHADHVLISGHDGGTGASRWTGIKNAGLPWELGLAETHQTLVANGLRGRAVLQTDGQMKTGRDVAVACLLGAEEFGFSTAPLITLGCIMMRKCHTNTCPAGIATQDPVLRAKFAGKPEHVINYFFMLAEEVREIMAQLGFRTVNEMVGRSDMLEIDPKVLEGNEKLENIDLSRLLKPAAEISPGAVQYCVEKQDHGLDMALDNKLIASSTAALRKGVRVFIETPVRNINRAVGTMLSHEVTKRYHIHGLPSDTIHIKLNGSAGQSFGAFLCPGITLELEGDSNDYVGKGLSGGKIVVYPPRNSRFNPQDNIVIGNVALYGATKGEAYFNGMAAERFCVRNSGAQAVVEGIGDHGCEYMTGGTAVILGKTGRNFAAGMSGGIAYVYDVDGKFSSRCNYELVDLYAVVEEDDITTLRMMIQQHRLHTQSDLARDILLNFDTLLPKFIKVYPRDYKRVLDKLKEEKAAKEAEQKAREVVDKKPVEVIQAPNGISVKTEKVMNEEPSSRPSRVSNAVKYRGFIKYEREGTSYRDPNERVKDWNEVAIELVPGPLLKTQSARCMDCGTPFCHQEGSGAGCPLGNKIPEFNELVHQNRWHEALDRLLETNNFPEFTGRVCPAPCEGSCVLGIIDNPVSIKSIECAIIDKGFEEGWMVPRPPLRRTGKRVAIVGSGPAGLAAADQLNKMGHFVTVFERADRIGGLMMYGVPNMKADKEGIVQRRVELMAKEGVQFIVNAHVGSDPLYSVEKLRSENDAIILACGATKPKDLPIPGRELAGIHFAMEFLHANTKSLLDSNLEDGNYISAQGRKVVVIGGGDTGTDCIGTSIRHGCTNLVNLELLPEPPRKRAPDNPWPQWPRIFRVDYGHQEATSKFGKDPRSYKVLTKRFIGDENGNVKALEVIRVEWGKVNGRFQFKEVEGSEEIIEADLVLLAMGFLGPEATVANKLGLEQDMRSNFKAQFGNFATNVEGVFAAGDCRRGQSLVVWAITEGRQAAAAVDNYLSKDDEGETNGTEDIAVSSEGLVQPVVA.

The N-terminal 30 residues, 1–30 (MSAAQGLALKLRAAPAAGGVRGEKRRRAAS), are a transit peptide targeting the chloroplast. Disordered regions lie at residues 14 to 40 (APAAGGVRGEKRRRAASATAAAAARPR) and 61 to 94 (VAPRASASRQAEAGAGAGAARPPPRSMSKIPESS). Positions 65–80 (ASASRQAEAGAGAGAA) are enriched in low complexity. The active-site Nucleophile is the Cys-107. The Glutamine amidotransferase type-2 domain maps to 107 to 511 (CGVGFIAELS…PGMMLLVDFE (405 aa)). 1198–1255 (LAETHQTLVANGLRGRAVLQTDGQMKTGRDVAVACLLGAEEFGFSTAPLITLGCIMMR) is a binding site for FMN. 3 residues coordinate [3Fe-4S] cluster: Cys-1251, Cys-1257, and Cys-1262. An NAD(+)-binding site is contributed by 1974 to 1988 (GGGDTGTDCIGTSIR).

Belongs to the glutamate synthase family. In terms of assembly, monomer. The cofactor is [3Fe-4S] cluster. FAD serves as cofactor. It depends on FMN as a cofactor. Expressed in leaf blades and sheaths.

The protein resides in the plastid. It is found in the chloroplast. The catalysed reaction is 2 L-glutamate + NAD(+) = L-glutamine + 2-oxoglutarate + NADH + H(+). It functions in the pathway amino-acid biosynthesis; L-glutamate biosynthesis via GLT pathway; L-glutamate from 2-oxoglutarate and L-glutamine (NAD(+) route): step 1/1. Its pathway is energy metabolism; nitrogen metabolism. In terms of biological role, involved in glutamate biosynthesis. The sequence is that of Glutamate synthase 2 [NADH], chloroplastic from Oryza sativa subsp. japonica (Rice).